The primary structure comprises 73 residues: MFLSSAVRKDSNGVRHLPSVQRWTPGSPPTRAHGHVSYVAQCATAQCREAVGRTYPGVVKKGLENTDKVRGFI.

A disordered region spans residues 1-32; sequence MFLSSAVRKDSNGVRHLPSVQRWTPGSPPTRA.

This is an uncharacterized protein from Frog virus 3 (isolate Goorha) (FV-3).